The chain runs to 206 residues: Oligoribonuclease (206 aa).

Residues 20-183 form the Exonuclease domain; sequence LVWLDMEMTG…ADIHESIDEL (164 aa). Residue Tyr141 is part of the active site.

It belongs to the oligoribonuclease family.

It localises to the cytoplasm. In terms of biological role, 3'-to-5' exoribonuclease specific for small oligoribonucleotides. In Burkholderia lata (strain ATCC 17760 / DSM 23089 / LMG 22485 / NCIMB 9086 / R18194 / 383), this protein is Oligoribonuclease.